Consider the following 147-residue polypeptide: NADH-quinone oxidoreductase subunit A (147 aa).

3 helical membrane-spanning segments follow: residues 16 to 36, 68 to 88, and 98 to 118; these read FAIF…GGWF, FYLV…LFAW, and VGFV…VYLV.

Belongs to the complex I subunit 3 family. In terms of assembly, NDH-1 is composed of 13 different subunits. Subunits NuoA, H, J, K, L, M, N constitute the membrane sector of the complex.

It localises to the cell inner membrane. The enzyme catalyses a quinone + NADH + 5 H(+)(in) = a quinol + NAD(+) + 4 H(+)(out). NDH-1 shuttles electrons from NADH, via FMN and iron-sulfur (Fe-S) centers, to quinones in the respiratory chain. The immediate electron acceptor for the enzyme in this species is believed to be ubiquinone. Couples the redox reaction to proton translocation (for every two electrons transferred, four hydrogen ions are translocated across the cytoplasmic membrane), and thus conserves the redox energy in a proton gradient. The sequence is that of NADH-quinone oxidoreductase subunit A from Shigella boydii serotype 18 (strain CDC 3083-94 / BS512).